The following is a 190-amino-acid chain: Myophilin (190 aa).

The tract at residues 1-23 (MSNVPPPSGLSYQVKKKLEGKRD) is disordered. The Calponin-homology (CH) domain maps to 24-130 (KDQENEALEW…RTLFALGRTC (107 aa)). A Calponin-like repeat occupies 165–189 (VSLQYGSNKGASQAGINMGKQRMIM).

Belongs to the calponin family. In terms of tissue distribution, muscle specific.

This is Myophilin from Echinococcus granulosus (Hydatid tapeworm).